A 146-amino-acid polypeptide reads, in one-letter code: Universal stress protein MT1672 (146 aa).

Belongs to the universal stress protein A family.

The sequence is that of Universal stress protein MT1672 from Mycobacterium tuberculosis (strain CDC 1551 / Oshkosh).